The chain runs to 1627 residues: Pleckstrin homology domain-containing family G member 4B (1627 aa).

Disordered stretches follow at residues tyrosine 211–arginine 349, leucine 381–valine 475, valine 501–aspartate 537, serine 959–proline 1008, threonine 1049–leucine 1111, and proline 1124–serine 1159. Over residues glycine 241–serine 251 the composition is skewed to polar residues. Composition is skewed to basic and acidic residues over residues glutamine 262–glutamate 273 and glutamate 310–lysine 322. Over residues arginine 465 to alanine 474 the composition is skewed to gly residues. Over residues proline 975–arginine 985 the composition is skewed to basic and acidic residues. A compositionally biased stretch (polar residues) spans serine 1057 to alanine 1068. The segment covering arginine 1070–lysine 1081 has biased composition (basic residues). Polar residues-rich tracts occupy residues proline 1101–leucine 1111 and proline 1133–serine 1144. A DH domain is found at arginine 1161–leucine 1340. The PH domain occupies asparagine 1352 to tryptophan 1460. Residues lysine 1519–glutamine 1558 form a disordered region. Positions threonine 1521–aspartate 1535 are enriched in polar residues. Residues serine 1545–glutamine 1558 show a composition bias toward low complexity.

Found in a complex with ARHGEF11 and ARHGEF12; binding to ARHGEF11 and ARHGEF12 enhances CDC42 GEF activity of PLEKHG4B, and PLEKHG4B, in turn, inhibits ARHGEF11- and ARHGEF12-mediated RHOA activation. Interacts with ANXA2; this interaction is required for PLEKHG4B localization to cell-cell adhesions.

The protein localises to the basal cell membrane. Its subcellular location is the cell junction. It localises to the nucleus. The protein resides in the cytoplasm. Guanine nucleotide exchange factor (GEF) which specifically activates small GTPase CDC42 by exchanging bound GDP for free GTP. Plays a role in actin cytoskeletal remodeling in the late stage of cell-cell junction formation by regulating the contractility of actin filaments, which prompts the conversion from 'open' to 'closed' junctions. In Homo sapiens (Human), this protein is Pleckstrin homology domain-containing family G member 4B.